A 113-amino-acid polypeptide reads, in one-letter code: Large ribosomal subunit protein eL33 (113 aa).

This sequence belongs to the eukaryotic ribosomal protein eL33 family.

The polypeptide is Large ribosomal subunit protein eL33 (RPL35A) (Tetrahymena thermophila (strain SB210)).